We begin with the raw amino-acid sequence, 800 residues long: DNA topoisomerase 4 subunit A (800 aa).

The Topo IIA-type catalytic domain occupies 31–495 (LPDVRDGLKP…EIEEIKIDKE (465 aa)). Residue Tyr119 is the O-(5'-phospho-DNA)-tyrosine intermediate of the active site.

It belongs to the type II topoisomerase GyrA/ParC subunit family. ParC type 2 subfamily. Heterotetramer composed of ParC and ParE.

It is found in the cell membrane. The catalysed reaction is ATP-dependent breakage, passage and rejoining of double-stranded DNA.. In terms of biological role, topoisomerase IV is essential for chromosome segregation. It relaxes supercoiled DNA. Performs the decatenation events required during the replication of a circular DNA molecule. The protein is DNA topoisomerase 4 subunit A of Staphylococcus aureus (strain MW2).